The following is a 728-amino-acid chain: Leucine-rich repeat and calponin homology domain-containing protein 1 (728 aa).

The segment covering 24–36 has biased composition (basic residues); it reads HHPHHHHHHHQHH. Residues 24–57 form a disordered region; it reads HHPHHHHHHHQHHGGTGAPGGAGGGGGGSGGFNL. The segment covering 37-54 has biased composition (gly residues); that stretch reads GGTGAPGGAGGGGGGSGG. LRR repeat units lie at residues 98–119, 121–143, 144–166, 167–187, 189–210, 212–234, 235–255, 257–278, and 283–304; these read DTVQADLSKNRLVEVPMELCHF, SLEILNLYHNCIRVIPEAIVNLQ, MLTYLNLSRNQLSALPACLCGLP, LKVLIASNNKLGSLPEEIGQL, QLMELDVSCNEITALPQQIGQL, SLRELNVRRNYLKVLPQELVDLS, LVKFDFSCNKVLVIPICFREM, QLQVLLLENNPLQSPPAQICTK, and IFKYLSIQACQIKTADSLYLHT. Basic and acidic residues predominate over residues 311 to 322; it reads HQHVEDGKKDSD. Positions 311 to 348 are disordered; the sequence is HQHVEDGKKDSDSGVGSDNGDKRLSATEPSDEDTVSLN. S370 carries the phosphoserine modification. The disordered stretch occupies residues 377-398; the sequence is HQEFQPEPSLLGDSTNSGEERD. At S409 the chain carries Phosphoserine. The segment covering 516–525 has biased composition (polar residues); that stretch reads LQSNGSQYSP. The disordered stretch occupies residues 516–547; it reads LQSNGSQYSPNEIRENSPAVSPTTNSTAPFGL. A phosphoserine mark is found at S532 and S536. Over residues 533–543 the composition is skewed to polar residues; that stretch reads PAVSPTTNSTA. Phosphothreonine is present on T568. In terms of domain architecture, Calponin-homology (CH) spans 576-692; it reads MREEKELVEQ…TLLALGEKAP (117 aa).

In terms of assembly, interacts (via LRR repeats) with unphosphorylated DOCK8 (via DHR-2 domain); the interaction prevents the interaction between DOCK8 and CDC42.

The protein localises to the cytoplasm. Acts as a negative regulator of GTPase CDC42 by sequestering CDC42-guanine exchange factor DOCK8. Probably by preventing CDC42 activation, negatively regulates CD4(+) T-cell migration. The protein is Leucine-rich repeat and calponin homology domain-containing protein 1 (LRCH1) of Homo sapiens (Human).